A 176-amino-acid chain; its full sequence is Peptidyl-tRNA hydrolase (176 aa).

Y14 provides a ligand contact to tRNA. H19 functions as the Proton acceptor in the catalytic mechanism. 3 residues coordinate tRNA: Y65, N67, and N113.

The protein belongs to the PTH family. Monomer.

Its subcellular location is the cytoplasm. The enzyme catalyses an N-acyl-L-alpha-aminoacyl-tRNA + H2O = an N-acyl-L-amino acid + a tRNA + H(+). Hydrolyzes ribosome-free peptidyl-tRNAs (with 1 or more amino acids incorporated), which drop off the ribosome during protein synthesis, or as a result of ribosome stalling. Its function is as follows. Catalyzes the release of premature peptidyl moieties from peptidyl-tRNA molecules trapped in stalled 50S ribosomal subunits, and thus maintains levels of free tRNAs and 50S ribosomes. The sequence is that of Peptidyl-tRNA hydrolase from Phytoplasma mali (strain AT).